A 175-amino-acid polypeptide reads, in one-letter code: Arginine repressor (175 aa).

Positions 1 to 23 (MSVSTPERGGAEQGKGPAIARTR) are disordered.

This sequence belongs to the ArgR family.

It is found in the cytoplasm. It functions in the pathway amino-acid biosynthesis; L-arginine biosynthesis [regulation]. In terms of biological role, regulates arginine biosynthesis genes. The protein is Arginine repressor of Nocardia farcinica (strain IFM 10152).